The primary structure comprises 506 residues: Maturase K (506 aa).

It belongs to the intron maturase 2 family. MatK subfamily.

The protein resides in the plastid. Its subcellular location is the chloroplast. Usually encoded in the trnK tRNA gene intron. Probably assists in splicing its own and other chloroplast group II introns. The protein is Maturase K of Rhododendron tomentosum (Marsh Labrador tea).